Consider the following 606-residue polypeptide: Diphthine--ammonia ligase (606 aa).

In the N-terminal section; belongs to the Diphthine--ammonia ligase family. It in the C-terminal section; belongs to the RutC family.

The protein localises to the cytoplasm. The protein resides in the nucleus. The catalysed reaction is diphthine-[translation elongation factor 2] + NH4(+) + ATP = diphthamide-[translation elongation factor 2] + AMP + diphosphate + H(+). Its pathway is protein modification; peptidyl-diphthamide biosynthesis. Its function is as follows. Amidase that catalyzes the last step of diphthamide biosynthesis using ammonium and ATP. Diphthamide biosynthesis consists in the conversion of an L-histidine residue in the translation elongation factor eEF-2 (eft201 or eft202) to diphthamide. Has a role in meiosis. This chain is Diphthine--ammonia ligase (mug71), found in Schizosaccharomyces pombe (strain 972 / ATCC 24843) (Fission yeast).